Consider the following 490-residue polypeptide: Transcription factor lin-26 (490 aa).

Disordered stretches follow at residues 96-176 (KYKD…PLHQ), 236-262 (TPEY…EPDS), and 302-326 (ASKP…KKHR). The tract at residues 101–110 (SSSPESPSTT) is PEST. Low complexity predominate over residues 101 to 120 (SSSPESPSTTASTAAQHTPP). 2 stretches are compositionally biased toward polar residues: residues 123–132 (AVSTPTSINT) and 151–176 (NLST…PLHQ). The span at 236 to 260 (TPEYDDNHHSETISKASSEDLKTEP) shows a compositional bias: basic and acidic residues. The C2H2-type; degenerate zinc-finger motif lies at 353 to 381 (YKCALCGKPTTLNSTGSRWNLLRHVIMIH).

In terms of tissue distribution, expressed in somatic gonads and germline precursors until the 50-cell stage. After the 100-cell stage, expression is seen in differentiating hypodermal and support cells (at protein level).

It localises to the nucleus. Probable transcription factor. Required to specify the fates of hypodermal and neuron-associated support cells. Functions during vulval development, playing a role in vulval precursor cell fate specification. Positively modulates expression of homeobox protein lin-39, perhaps by binding to regulatory regions of the lin-39 gene, acting in the vulval lineage. The protein is Transcription factor lin-26 of Caenorhabditis elegans.